Reading from the N-terminus, the 342-residue chain is Lipopolysaccharide heptosyltransferase 1 (342 aa).

ADP-L-glycero-beta-D-manno-heptose contacts are provided by Ser-188, Ser-189, Lys-193, Glu-225, Asp-268, Ser-269, Gly-270, and His-273.

The protein belongs to the glycosyltransferase 9 family.

The protein localises to the cell inner membrane. The enzyme catalyses an alpha-Kdo-(2-&gt;4)-alpha-Kdo-(2-&gt;6)-lipid A + ADP-L-glycero-beta-D-manno-heptose = an L-alpha-D-Hep-(1-&gt;5)-[alpha-Kdo-(2-&gt;4)]-alpha-Kdo-(2-&gt;6)-lipid A + ADP + H(+). The protein operates within bacterial outer membrane biogenesis; LPS core biosynthesis. In terms of biological role, glycosyltransferase involved in the biosynthesis of the core oligosaccharide region of lipopolysaccharide (LPS). Catalyzes the addition of the first heptose unit to one 3-deoxy-D-manno-octulosonic acid (Kdo) residue of the Kdo2-lipid A module. The sequence is that of Lipopolysaccharide heptosyltransferase 1 from Campylobacter coli.